We begin with the raw amino-acid sequence, 154 residues long: NADPH-dependent 7-cyano-7-deazaguanine reductase (154 aa).

Cys-52 (thioimide intermediate) is an active-site residue. The active-site Proton donor is Asp-59. Residues 74-76 (VES) and 93-94 (HE) each bind substrate.

This sequence belongs to the GTP cyclohydrolase I family. QueF type 1 subfamily.

Its subcellular location is the cytoplasm. It catalyses the reaction 7-aminomethyl-7-carbaguanine + 2 NADP(+) = 7-cyano-7-deazaguanine + 2 NADPH + 3 H(+). It functions in the pathway tRNA modification; tRNA-queuosine biosynthesis. Functionally, catalyzes the NADPH-dependent reduction of 7-cyano-7-deazaguanine (preQ0) to 7-aminomethyl-7-deazaguanine (preQ1). In Ruegeria sp. (strain TM1040) (Silicibacter sp.), this protein is NADPH-dependent 7-cyano-7-deazaguanine reductase.